The sequence spans 347 residues: Spermidine/putrescine import ATP-binding protein PotA (347 aa).

Positions 6–236 (IELRDISKHY…PKNSFVAKFI (231 aa)) constitute an ABC transporter domain. 38–45 (GPSGCGKT) lines the ATP pocket.

Belongs to the ABC transporter superfamily. Spermidine/putrescine importer (TC 3.A.1.11.1) family. As to quaternary structure, the complex is composed of two ATP-binding proteins (PotA), two transmembrane proteins (PotB and PotC) and a solute-binding protein (PotD).

The protein localises to the cell membrane. The catalysed reaction is ATP + H2O + polyamine-[polyamine-binding protein]Side 1 = ADP + phosphate + polyamineSide 2 + [polyamine-binding protein]Side 1.. In terms of biological role, part of the ABC transporter complex PotABCD involved in spermidine/putrescine import. Responsible for energy coupling to the transport system. The protein is Spermidine/putrescine import ATP-binding protein PotA of Clostridioides difficile (strain 630) (Peptoclostridium difficile).